The following is a 343-amino-acid chain: Phosphoribosylformylglycinamidine cyclo-ligase (343 aa).

This sequence belongs to the AIR synthase family.

It localises to the cytoplasm. It carries out the reaction 2-formamido-N(1)-(5-O-phospho-beta-D-ribosyl)acetamidine + ATP = 5-amino-1-(5-phospho-beta-D-ribosyl)imidazole + ADP + phosphate + H(+). It functions in the pathway purine metabolism; IMP biosynthesis via de novo pathway; 5-amino-1-(5-phospho-D-ribosyl)imidazole from N(2)-formyl-N(1)-(5-phospho-D-ribosyl)glycinamide: step 2/2. The sequence is that of Phosphoribosylformylglycinamidine cyclo-ligase from Enterococcus faecalis (strain ATCC 700802 / V583).